Consider the following 432-residue polypeptide: Adenylosuccinate synthetase (432 aa).

Residues 13-19 (GDEGKGK) and 41-43 (GHT) each bind GTP. The active-site Proton acceptor is the Asp14. Positions 14 and 41 each coordinate Mg(2+). IMP contacts are provided by residues 14-17 (DEGK), 39-42 (NAGH), Thr130, Arg144, Gln225, Thr240, and Arg304. The active-site Proton donor is the His42. 300-306 (ATTGRKR) is a binding site for substrate. GTP-binding positions include Arg306, 332-334 (KLD), and 415-417 (STG).

The protein belongs to the adenylosuccinate synthetase family. In terms of assembly, homodimer. Requires Mg(2+) as cofactor.

The protein resides in the cytoplasm. The catalysed reaction is IMP + L-aspartate + GTP = N(6)-(1,2-dicarboxyethyl)-AMP + GDP + phosphate + 2 H(+). Its pathway is purine metabolism; AMP biosynthesis via de novo pathway; AMP from IMP: step 1/2. Functionally, plays an important role in the de novo pathway of purine nucleotide biosynthesis. Catalyzes the first committed step in the biosynthesis of AMP from IMP. This chain is Adenylosuccinate synthetase, found in Pseudoalteromonas atlantica (strain T6c / ATCC BAA-1087).